A 209-amino-acid polypeptide reads, in one-letter code: Nascent polypeptide-associated complex subunit alpha-like protein 5 (209 aa).

The tract at residues 23 to 71 is disordered; that stretch reads EKEDDVVVEDVKDGEEEDDDEDDEDVEVEGEGGNENAKQSRSEKKSRKA. The span at 25–54 shows a compositional bias: acidic residues; it reads EDDVVVEDVKDGEEEDDDEDDEDVEVEGEG. Residues 62 to 127 enclose the NAC-A/B domain; sequence SRSEKKSRKA…AKVDDLSSQL (66 aa). The 38-residue stretch at 170 to 207 folds into the UBA domain; it reads VEARDIDLVMTQAGVSKAKAVSALKANDGDIVSAIMEL.

It belongs to the NAC-alpha family.

Its function is as follows. May promote appropriate targeting of ribosome-nascent polypeptide complexes. The sequence is that of Nascent polypeptide-associated complex subunit alpha-like protein 5 from Arabidopsis thaliana (Mouse-ear cress).